The following is a 99-amino-acid chain: Virion membrane protein OPG135 (99 aa).

Residues 1–22 (MSCYTAILKSVGGLALFQVANG) form the signal peptide. Residues 23-45 (AIDLCRHFFMYFCEQKLRPNSFW) lie on the Intravirion side of the membrane. A helical membrane pass occupies residues 46-66 (FVVVRAIASMIMYLVLGIALL). Residues 67-83 (YISEQDDKKNTNNDGSN) are Virion surface-facing. A compositionally biased stretch (basic and acidic residues) spans 73 to 89 (DKKNTNNDGSNNDKRNE). A disordered region spans residues 73–99 (DKKNTNNDGSNNDKRNESSINSNSSPK). Residue Asn88 is glycosylated (N-linked (GlcNAc...) asparagine; by host). Over residues 90 to 99 (SSINSNSSPK) the composition is skewed to polar residues.

This sequence belongs to the oerthopoxvirus OPG135 family.

The protein localises to the virion membrane. It is found in the host cytoplasm. In terms of biological role, envelope protein. Required for an early step in virion morphogenesis. This Homo sapiens (Human) protein is Virion membrane protein OPG135 (OPG135).